A 467-amino-acid chain; its full sequence is ATP-dependent protease ATPase subunit HslU (467 aa).

Residues Val-22 and 64–69 (GVGKTE) contribute to the ATP site. The disordered stretch occupies residues 166–185 (GQNQDEEEEPPTEEIKTKRS). Residues Asp-280, Glu-345, and Arg-417 each coordinate ATP.

Belongs to the ClpX chaperone family. HslU subfamily. A double ring-shaped homohexamer of HslV is capped on each side by a ring-shaped HslU homohexamer. The assembly of the HslU/HslV complex is dependent on binding of ATP.

The protein localises to the cytoplasm. Its function is as follows. ATPase subunit of a proteasome-like degradation complex; this subunit has chaperone activity. The binding of ATP and its subsequent hydrolysis by HslU are essential for unfolding of protein substrates subsequently hydrolyzed by HslV. HslU recognizes the N-terminal part of its protein substrates and unfolds these before they are guided to HslV for hydrolysis. In Staphylococcus epidermidis (strain ATCC 35984 / DSM 28319 / BCRC 17069 / CCUG 31568 / BM 3577 / RP62A), this protein is ATP-dependent protease ATPase subunit HslU.